We begin with the raw amino-acid sequence, 38 residues long: Large ribosomal subunit protein bL36 (38 aa).

Belongs to the bacterial ribosomal protein bL36 family.

The sequence is that of Large ribosomal subunit protein bL36 from Streptococcus agalactiae serotype III (strain NEM316).